An 859-amino-acid polypeptide reads, in one-letter code: Rab effector MyRIP (859 aa).

A RabBD domain is found at 4–124; that stretch reads KLDLSGLTDD…AQSLEWFYNN (121 aa). The FYVE-type zinc finger occupies 63 to 105; that stretch reads CCMRCCSPFTFLVNTKRQCGDCKFNVCKSCCSYQKHEKAWVCC. The segment at 143–560 is myosin-binding; it reads RKHRLESGAC…LDTHQVSDDL (418 aa). The interval 193 to 209 is PKA-binding; that stretch reads VALRVAEEAIEEAISKA. Positions 232–248 are negative regulation of PKA-binding; it reads LTEELATTILQKIIRKQ. Residues 251-285 form a disordered region; sequence KSEQQVEEEPGWPHPQSCSTKVADEGTSASPGGYR. S298 carries the post-translational modification Phosphoserine. Disordered regions lie at residues 302 to 374, 386 to 629, and 783 to 812; these read EEAL…KPKS, VASA…SQSV, and DQKQRTQVQTIDTSRQQRRKLPAPPVKAEK. Residues 316-326 are compositionally biased toward basic and acidic residues; the sequence is QPRDQGQHPRA. Position 350 is a phosphoserine (S350). A compositionally biased stretch (acidic residues) spans 393-403; the sequence is MGSDSEEDFDW. Low complexity predominate over residues 435–450; that stretch reads PIAASPSSALSPNPEA. 2 stretches are compositionally biased toward basic and acidic residues: residues 484–494 and 607–617; these read AAEKMRLHGEL and SEPKTESENQK. The actin-binding stretch occupies residues 495–856; it reads DVNFNPQLAS…DLMEPALESA (362 aa). 2 stretches are compositionally biased toward polar residues: residues 618–629 and 787–796; these read ESLSSEDNSQSV and RTQVQTIDTS.

Binds MYO5A, MYO7A and F-actin. Binds RAB27A that has been activated by GTP-binding via its N-terminus. Interacts with PRKAR2A. Interacts with components of the exocyst complex, including EXOC3 and EXOC4. In terms of tissue distribution, detected in brain, skin, heart, adrenal medulla, pancreas, intestine, liver, kidney, muscle and testis.

Its subcellular location is the cytoplasm. It is found in the perinuclear region. The protein resides in the cytoplasmic vesicle. The protein localises to the secretory vesicle. Rab effector protein involved in melanosome transport. Serves as link between melanosome-bound RAB27A and the motor proteins MYO5A and MYO7A. May link RAB27A-containing vesicles to actin filaments. Functions as a protein kinase A-anchoring protein (AKAP). May act as a scaffolding protein that links PKA to components of the exocytosis machinery, thus facilitating exocytosis, including insulin release. This Homo sapiens (Human) protein is Rab effector MyRIP (MYRIP).